Here is a 91-residue protein sequence, read N- to C-terminus: Small ribosomal subunit protein bS16 (91 aa).

This sequence belongs to the bacterial ribosomal protein bS16 family.

The polypeptide is Small ribosomal subunit protein bS16 (Staphylococcus aureus (strain Mu3 / ATCC 700698)).